The primary structure comprises 505 residues: Maturase K (505 aa).

This sequence belongs to the intron maturase 2 family. MatK subfamily.

The protein resides in the plastid. It localises to the chloroplast. In terms of biological role, usually encoded in the trnK tRNA gene intron. Probably assists in splicing its own and other chloroplast group II introns. This Kunzea ericoides (White teatree) protein is Maturase K.